The chain runs to 130 residues: Universal stress protein MSMEG_4207 (130 aa).

Residue Lys104 is modified to N6-acetyllysine.

This sequence belongs to the universal stress protein A family. In terms of processing, acetylated on Lys-104 by PatA in the presence of acetyl-CoA as an acetyl donor.

This is Universal stress protein MSMEG_4207 from Mycolicibacterium smegmatis (strain ATCC 700084 / mc(2)155) (Mycobacterium smegmatis).